Consider the following 158-residue polypeptide: Cytosine deaminase (158 aa).

The 121-residue stretch at 9 to 129 folds into the CMP/dCMP-type deaminase domain; that stretch reads KWDQKGMDIA…KYLQTRGHEV (121 aa). Substrate is bound at residue Asn-51. His-62 is a Zn(2+) binding site. Glu-64 functions as the Proton donor in the catalytic mechanism. Zn(2+) is bound by residues Cys-91 and Cys-94. Position 155 (Asp-155) interacts with substrate.

Belongs to the cytidine and deoxycytidylate deaminase family. In terms of assembly, homodimer. Requires Zn(2+) as cofactor.

The protein localises to the cytoplasm. It localises to the nucleus. The enzyme catalyses cytosine + H2O + H(+) = uracil + NH4(+). It functions in the pathway pyrimidine metabolism; UMP biosynthesis via salvage pathway; uracil from cytosine: step 1/1. In terms of biological role, catalyzes the hydrolytic deamination of cytosine to uracil or 5-methylcytosine to thymine. Is involved in the pyrimidine salvage pathway, which allows the cell to utilize cytosine for pyrimidine nucleotide synthesis. This Saccharomyces cerevisiae (strain ATCC 204508 / S288c) (Baker's yeast) protein is Cytosine deaminase.